Consider the following 149-residue polypeptide: MKVVLQRVSKASVKIDDQVKGAINKGYVLLVGVADGDEQADIDYLVRKIHNLRIFEDESGRMNRSIEDVSGAILSISQFTLFADTKKGNRPSFTKAGAPEFATVMYNQFNATLRESGLQVETGEFGADMQVSLTNDGPVTILFDTKSAQ.

Residues 137–138 carry the Gly-cisPro motif, important for rejection of L-amino acids motif; that stretch reads GP.

The protein belongs to the DTD family. As to quaternary structure, homodimer.

The protein resides in the cytoplasm. It catalyses the reaction glycyl-tRNA(Ala) + H2O = tRNA(Ala) + glycine + H(+). The catalysed reaction is a D-aminoacyl-tRNA + H2O = a tRNA + a D-alpha-amino acid + H(+). Functionally, an aminoacyl-tRNA editing enzyme that deacylates mischarged D-aminoacyl-tRNAs. Also deacylates mischarged glycyl-tRNA(Ala), protecting cells against glycine mischarging by AlaRS. Acts via tRNA-based rather than protein-based catalysis; rejects L-amino acids rather than detecting D-amino acids in the active site. By recycling D-aminoacyl-tRNA to D-amino acids and free tRNA molecules, this enzyme counteracts the toxicity associated with the formation of D-aminoacyl-tRNA entities in vivo and helps enforce protein L-homochirality. This chain is D-aminoacyl-tRNA deacylase, found in Leuconostoc mesenteroides subsp. mesenteroides (strain ATCC 8293 / DSM 20343 / BCRC 11652 / CCM 1803 / JCM 6124 / NCDO 523 / NBRC 100496 / NCIMB 8023 / NCTC 12954 / NRRL B-1118 / 37Y).